A 254-amino-acid chain; its full sequence is Ubiquinone/menaquinone biosynthesis C-methyltransferase UbiE (254 aa).

S-adenosyl-L-methionine contacts are provided by residues Thr77, Asp98, 126 to 127, and Ser143; that span reads DA.

It belongs to the class I-like SAM-binding methyltransferase superfamily. MenG/UbiE family.

The enzyme catalyses a 2-demethylmenaquinol + S-adenosyl-L-methionine = a menaquinol + S-adenosyl-L-homocysteine + H(+). It carries out the reaction a 2-methoxy-6-(all-trans-polyprenyl)benzene-1,4-diol + S-adenosyl-L-methionine = a 5-methoxy-2-methyl-3-(all-trans-polyprenyl)benzene-1,4-diol + S-adenosyl-L-homocysteine + H(+). Its pathway is quinol/quinone metabolism; menaquinone biosynthesis; menaquinol from 1,4-dihydroxy-2-naphthoate: step 2/2. The protein operates within cofactor biosynthesis; ubiquinone biosynthesis. In terms of biological role, methyltransferase required for the conversion of demethylmenaquinol (DMKH2) to menaquinol (MKH2) and the conversion of 2-polyprenyl-6-methoxy-1,4-benzoquinol (DDMQH2) to 2-polyprenyl-3-methyl-6-methoxy-1,4-benzoquinol (DMQH2). This chain is Ubiquinone/menaquinone biosynthesis C-methyltransferase UbiE, found in Blochmanniella pennsylvanica (strain BPEN).